Consider the following 173-residue polypeptide: NADH-ubiquinone oxidoreductase chain 6 (173 aa).

A run of 5 helical transmembrane segments spans residues Met1–Ser21, Tyr27–Gly47, Val48–Val68, Gly91–Leu111, and Cys139–Leu159.

The protein belongs to the complex I subunit 6 family.

It is found in the mitochondrion membrane. It carries out the reaction a ubiquinone + NADH + 5 H(+)(in) = a ubiquinol + NAD(+) + 4 H(+)(out). In terms of biological role, core subunit of the mitochondrial membrane respiratory chain NADH dehydrogenase (Complex I) that is believed to belong to the minimal assembly required for catalysis. Complex I functions in the transfer of electrons from NADH to the respiratory chain. The immediate electron acceptor for the enzyme is believed to be ubiquinone. This Fratercula cirrhata (Tufted puffin) protein is NADH-ubiquinone oxidoreductase chain 6 (MT-ND6).